The sequence spans 127 residues: Small ribosomal subunit protein uS17m (127 aa).

The protein belongs to the universal ribosomal protein uS17 family.

Its subcellular location is the mitochondrion. The chain is Small ribosomal subunit protein uS17m (mrps17) from Dictyostelium discoideum (Social amoeba).